Reading from the N-terminus, the 176-residue chain is Calcium and integrin-binding family member 2 (176 aa).

3 consecutive EF-hand domains span residues 55-90 (RENP…LCES), 92-127 (PRDL…LTKS), and 133-168 (EVVL…APDF). The Ca(2+) site is built by aspartate 105, asparagine 107, aspartate 109, aspartate 116, aspartate 146, aspartate 148, aspartate 150, lysine 152, and aspartate 157.

As to quaternary structure, monomer. Homodimer. Interacts with WHRN and MYO7A. Interacts with ITGA2B (via C-terminus cytoplasmic tail region); the interactions are stabilized/increased in a calcium and magnesium-dependent manner. Interacts with ITGA7 (via C-terminus cytoplasmic tail region); the interactions are stabilized/increased in a calcium and magnesium-dependent manner. Interacts with TMC1. Interacts with TMC2. As to expression, expressed in liver, heart, kidney, brain, spleen, stomach, ovary, testis and muscle.

It localises to the cytoplasm. Its subcellular location is the cell projection. The protein localises to the stereocilium. It is found in the photoreceptor inner segment. The protein resides in the cilium. It localises to the photoreceptor outer segment. Its subcellular location is the cell membrane. The protein localises to the sarcolemma. In terms of biological role, calcium- and integrin-binding protein that plays a role in intracellular calcium homeostasis. Acts as an auxiliary subunit of the sensory mechanoelectrical transduction (MET) channel in hair cells. Essential for mechanoelectrical transduction (MET) currents in auditory hair cells and thereby required for hearing. Regulates the function of hair cell mechanotransduction by controlling the distribution of transmembrane channel-like proteins TMC1 and TMC2, and by regulating the function of the MET channels in hair cells. Required for the maintenance of auditory hair cell stereocilia bundle morphology and function and for hair-cell survival in the cochlea. Critical for proper photoreceptor cell maintenance and function. Plays a role in intracellular calcium homeostasis by decreasing ATP-induced calcium release. The sequence is that of Calcium and integrin-binding family member 2 (CIB2) from Ovis aries (Sheep).